Reading from the N-terminus, the 230-residue chain is UPF0758 protein Daud_1467 (230 aa).

In terms of domain architecture, MPN spans T108–F230. H179, H181, and D192 together coordinate Zn(2+). The JAMM motif signature appears at H179–D192.

It belongs to the UPF0758 family.

This chain is UPF0758 protein Daud_1467, found in Desulforudis audaxviator (strain MP104C).